A 161-amino-acid chain; its full sequence is Nucleotide-binding protein Gura_0717 (161 aa).

The protein belongs to the YajQ family.

Its function is as follows. Nucleotide-binding protein. The sequence is that of Nucleotide-binding protein Gura_0717 from Geotalea uraniireducens (strain Rf4) (Geobacter uraniireducens).